We begin with the raw amino-acid sequence, 203 residues long: Peptide deformylase (203 aa).

2 residues coordinate Fe cation: Cys130 and His173. Residue Glu174 is part of the active site. His177 contacts Fe cation.

It belongs to the polypeptide deformylase family. Fe(2+) serves as cofactor.

The enzyme catalyses N-terminal N-formyl-L-methionyl-[peptide] + H2O = N-terminal L-methionyl-[peptide] + formate. Removes the formyl group from the N-terminal Met of newly synthesized proteins. Requires at least a dipeptide for an efficient rate of reaction. N-terminal L-methionine is a prerequisite for activity but the enzyme has broad specificity at other positions. The chain is Peptide deformylase from Streptococcus pneumoniae serotype 2 (strain D39 / NCTC 7466).